The chain runs to 574 residues: Amino-acid acetyltransferase, mitochondrial (574 aa).

A mitochondrion-targeting transit peptide spans 1–13; that stretch reads MWRRIFAHELKYD. An N-acetyltransferase domain is found at 392-560; that stretch reads KGAKPSSNSP…KRLREFMRSV (169 aa).

It belongs to the acetyltransferase family. Interacts with the acetylglutamate kinase chain of AGR5,6.

The protein resides in the mitochondrion. It catalyses the reaction L-glutamate + acetyl-CoA = N-acetyl-L-glutamate + CoA + H(+). The protein operates within amino-acid biosynthesis; L-arginine biosynthesis; N(2)-acetyl-L-ornithine from L-glutamate: step 1/4. With respect to regulation, feedback inhibition by L-arginine. Its function is as follows. N-acetylglutamate synthase involved in arginine biosynthesis. The polypeptide is Amino-acid acetyltransferase, mitochondrial (ARG2) (Saccharomyces cerevisiae (strain RM11-1a) (Baker's yeast)).